The following is a 185-amino-acid chain: Threonylcarbamoyl-AMP synthase (185 aa).

The YrdC-like domain maps to 4 to 185 (SFRVQQAARE…LATGEVVRPG (182 aa)).

The protein belongs to the SUA5 family. TsaC subfamily.

The protein localises to the cytoplasm. The catalysed reaction is L-threonine + hydrogencarbonate + ATP = L-threonylcarbamoyladenylate + diphosphate + H2O. In terms of biological role, required for the formation of a threonylcarbamoyl group on adenosine at position 37 (t(6)A37) in tRNAs that read codons beginning with adenine. Catalyzes the conversion of L-threonine, HCO(3)(-)/CO(2) and ATP to give threonylcarbamoyl-AMP (TC-AMP) as the acyladenylate intermediate, with the release of diphosphate. This Pseudomonas putida (strain ATCC 47054 / DSM 6125 / CFBP 8728 / NCIMB 11950 / KT2440) protein is Threonylcarbamoyl-AMP synthase.